A 491-amino-acid chain; its full sequence is Serine/threonine-protein kinase 3/4 (491 aa).

The interval Met1–Leu24 is disordered. Over residues Arg7–Lys17 the composition is skewed to basic residues. The Protein kinase domain occupies Phe32 to Ile283. ATP contacts are provided by residues Leu38–Val46 and Lys61. Asp151 acts as the Proton acceptor in catalysis. Residue Thr185 is modified to Phosphothreonine; by autocatalysis. A coiled-coil region spans residues Leu292–Arg334. Disordered regions lie at residues Gln307–Ser394 and Glu406–Gly435. Residues Asp315 to Asp328 are compositionally biased toward acidic residues. Polar residues-rich tracts occupy residues Thr363 to Ile373 and Gln410 to Asn428. Residues Phe437–Lys484 form the SARAH domain. The stretch at Ser442–Gln475 forms a coiled coil.

Belongs to the protein kinase superfamily. STE Ser/Thr protein kinase family. STE20 subfamily. As to quaternary structure, homodimer; mediated via the coiled-coil region. Requires Mg(2+) as cofactor. Proteolytically cleaved by caspase-3 during apoptosis at Asp-328 resulting in a 37 kDa form. Proteolytic cleavage results in kinase activation and nuclear translocation of the truncated form (MST1/N).

It is found in the cytoplasm. Its subcellular location is the nucleus. It catalyses the reaction L-seryl-[protein] + ATP = O-phospho-L-seryl-[protein] + ADP + H(+). The catalysed reaction is L-threonyl-[protein] + ATP = O-phospho-L-threonyl-[protein] + ADP + H(+). Inhibited by the C-terminal non-catalytic region. Activated by caspase-cleavage. Full activation also requires homodimerization and autophosphorylation of Thr-185. In terms of biological role, stress-activated, pro-apoptotic kinase which, following caspase-cleavage, enters the nucleus and induces chromatin condensation followed by internucleosomal DNA fragmentation. Key component of the Hippo signaling pathway which plays a pivotal role in organ size control and tumor suppression by restricting proliferation and promoting apoptosis. The core of this pathway is composed of a kinase cascade wherein stk3/mst2 and stk4/mst1, in complex with its regulatory protein sav1, phosphorylates and activates lats1/2 in complex with its regulatory protein mob1, which in turn phosphorylates and inactivates yap1 oncoprotein and wwtr1/taz. Phosphorylation of yap1 by lats2 inhibits its translocation into the nucleus to regulate cellular genes important for cell proliferation, cell death, and cell migration. Phosphorylates 'Ser-14' of histone H2B (H2BS14ph) during apoptosis. The chain is Serine/threonine-protein kinase 3/4 (STK4) from Squalus acanthias (Spiny dogfish).